The primary structure comprises 1508 residues: uncharacterized protein (1508 aa).

Residues 149–267 (ARRQQWRLRR…ARSLQEHRAT (119 aa)) are a coiled coil. Disordered regions lie at residues 248–268 (ERSEREREEAARSLQEHRATE), 345–403 (SQDW…LAGS), 536–575 (FLKKHPKDLKDTWNNGGGSLAGRTEEGKARGTLGRKGKNL), 725–754 (GLEEEDEMPHQEASGLGCRGAPEEPDSQEH), and 868–916 (EAKS…AEPW). Residues 868–881 (EAKSKESGEGDKPG) show a composition bias toward basic and acidic residues. A coiled-coil region spans residues 972–1034 (ISRLERDNHR…KGNLGQLQKA (63 aa)). 2 disordered regions span residues 1158–1186 (LAAGQTGPSTGTGNSRRGADSPPPSLVWR) and 1204–1246 (KEAH…EEDP). Residues 1163 to 1172 (TGPSTGTGNS) are compositionally biased toward polar residues. Residues 1204–1215 (KEAHLEKEEKRP) show a composition bias toward basic and acidic residues. Residues 1220-1230 (AQGQALSSLSN) are compositionally biased toward polar residues. Positions 1271-1302 (HQASLDEATRLQEELQAKLEELQKKQHEAKLA) form a coiled coil.

This is an uncharacterized protein from Homo sapiens (Human).